Reading from the N-terminus, the 485-residue chain is ATP synthase subunit beta 2 (485 aa).

The segment covering methionine 1–glutamine 10 has biased composition (basic and acidic residues). Residues methionine 1–alanine 27 form a disordered region. Positions isoleucine 11–glutamate 24 are enriched in polar residues. Glycine 177–threonine 184 is an ATP binding site.

The protein belongs to the ATPase alpha/beta chains family. F-type ATPases have 2 components, CF(1) - the catalytic core - and CF(0) - the membrane proton channel. CF(1) has five subunits: alpha(3), beta(3), gamma(1), delta(1), epsilon(1). CF(0) has three main subunits: a(1), b(2) and c(9-12). The alpha and beta chains form an alternating ring which encloses part of the gamma chain. CF(1) is attached to CF(0) by a central stalk formed by the gamma and epsilon chains, while a peripheral stalk is formed by the delta and b chains.

The protein localises to the cell inner membrane. It carries out the reaction ATP + H2O + 4 H(+)(in) = ADP + phosphate + 5 H(+)(out). Produces ATP from ADP in the presence of a proton gradient across the membrane. The catalytic sites are hosted primarily by the beta subunits. The chain is ATP synthase subunit beta 2 from Nitrosomonas eutropha (strain DSM 101675 / C91 / Nm57).